A 3046-amino-acid polypeptide reads, in one-letter code: Nucleosome-remodeling factor subunit BPTF (3046 aa).

The tract at residues 1 to 232 (MRGRRGRPPK…DIPPLEFPKS (232 aa)) is disordered. The span at 22–33 (PAPPPPPPPPTS) shows a compositional bias: pro residues. Over residues 62–72 (TRLSSPRGGSS) the composition is skewed to low complexity. Residues 78-87 (PPPPPAPPST) are compositionally biased toward pro residues. Residues 91-110 (GRGGRGGGGGRTGGGGGGGH) show a composition bias toward gly residues. Acidic residues predominate over residues 129-186 (HESEEEEEEEDMVSEEEEEEDGDAEETQDSEDDEEDEMEEDDDDSDYPEEMEDDDDDA). Residues 190-203 (TESSFRSHSTYSST) show a composition bias toward low complexity. The span at 205–215 (GRRKPRVHRPR) shows a compositional bias: basic residues. At Ser216 the chain carries Phosphoserine. Residues 240–300 (NEHIMNVIAI…LKAVLREEDT (61 aa)) form the DDT domain. A PHD-type 1 zinc finger spans residues 390 to 437 (DDHCRVCHKLGDLLCCETCSAVYHLECVKPPLEEVPEDEWQCEVCVAH). Basic and acidic residues-rich tracts occupy residues 567–609 (IDNV…SDDK) and 616–628 (EQGK…EVGD). Positions 567–774 (IDNVKSPEET…GAGKGASGST (208 aa)) are disordered. Phosphoserine is present on Ser572. Residues 574-604 (EETEKDKNETENDSKDAEKNREEFEDQSLEK) are a coiled coil. 2 stretches are compositionally biased toward polar residues: residues 631-653 (NSVS…SPSE) and 690-705 (TCES…SIQP). The interaction with KEAP1 stretch occupies residues 640–749 (NTTNATSEET…PVSIQEEIVG (110 aa)). The span at 706–723 (NLENSNSSSELNSSQSES) shows a compositional bias: low complexity. A compositionally biased stretch (basic and acidic residues) spans 725-738 (KAADDPENGERESH). A phosphoserine mark is found at Ser763 and Ser817. Positions 839–921 (YFKLGQEGKY…QLENNIPSSF (83 aa)) are interaction with MAZ. An N6-acetyllysine modification is found at Lys880. Residues 978-1007 (MTSIEREEKEKVKKKEKKQEEEETMQQATW) adopt a coiled-coil conformation. The interval 1057-1157 (YRKSLEGTKN…MKTESHVNCQ (101 aa)) is disordered. Position 1064 is a phosphothreonine (Thr1064). Basic and acidic residues-rich tracts occupy residues 1087–1102 (IKIE…KGSD) and 1113–1152 (DISK…KTES). Residues Lys1088, Lys1138, and Lys1209 each participate in a glycyl lysine isopeptide (Lys-Gly) (interchain with G-Cter in SUMO2) cross-link. Disordered stretches follow at residues 1215–1339 (KGIG…GNDF), 1371–1448 (IVSS…FRTR), 1465–1537 (GEST…NGKD), and 1605–1706 (NSSE…GESK). Polar residues-rich tracts occupy residues 1220–1232 (TSTN…SESP), 1242–1257 (QSDS…ANND), and 1266–1285 (CSES…TTNK). Residue Ser1231 is modified to Phosphoserine. Residues 1287-1305 (YPKDRVLDDVSIRSPETKC) are compositionally biased toward basic and acidic residues. Ser1300 is subject to Phosphoserine. Thr1303 carries the phosphothreonine modification. Ser1310 is modified (phosphoserine). Residues 1372–1386 (VSSSKSALHSSVPKS) show a composition bias toward low complexity. 2 stretches are compositionally biased toward polar residues: residues 1409 to 1426 (SESN…SIQD) and 1434 to 1444 (VQNSNESISEQ). The segment covering 1491–1525 (KKLEERPVNKCSDQIKLKNTTDKKNNENRESEKKG) has biased composition (basic and acidic residues). A compositionally biased stretch (polar residues) spans 1629 to 1656 (TLPSTKESDSTQTTTPSASCPESNSVNQ). A Glycyl lysine isopeptide (Lys-Gly) (interchain with G-Cter in SUMO2) cross-link involves residue Lys1730. Disordered regions lie at residues 1973–2003 (VPET…TPKQ) and 2041–2070 (QAKK…STIS). Positions 2022–2050 (EIRAFAERVEKEKAQAVEQQAKKRLEQQK) form a coiled coil. The segment covering 2054–2070 (IATSTTSPTSSTTSTIS) has biased composition (low complexity). The residue at position 2098 (Ser2098) is a Phosphoserine. Arg2155 is modified (omega-N-methylarginine). Residues 2160 to 2180 (TIRPNTSGSGGTTSNSQVITG) form a disordered region. 3 positions are modified to asymmetric dimethylarginine: Arg2162, Arg2184, and Arg2191. Residues 2232-2256 (VSAPNTVSSTPGQKSLTSATSTSNI) show a composition bias toward polar residues. Disordered regions lie at residues 2232-2270 (VSAP…QQGQ), 2346-2549 (TAST…RPQL), 2714-2733 (QAAK…SKQN), and 2795-2858 (PCPP…ISTT). Composition is skewed to low complexity over residues 2257-2270 (QSSA…QQGQ) and 2346-2362 (TAST…AGTG). Residues 2363 to 2375 (EQRQSKLSPQMQV) are compositionally biased toward polar residues. Positions 2391-2431 (PAEAQPQTAQPSAQPQPQTQPQSPAQPEVQTQPEVQTQTTV) are enriched in low complexity. The segment covering 2432–2485 (SSHVPSEAQPTHAQSSKPQVAAQSQPQSNVQGQSPVRVQSPSQTRIRPSTPSQL) has biased composition (polar residues). Position 2465 is a phosphoserine (Ser2465). Positions 2486-2538 (SPGQQSQVQTTTSQPIPIQPHTSLQIPSQGQPQSQPQVQSSTQTLSSGQTLNQ) are enriched in low complexity. Residues 2706-2732 (DKIDKEEKQAAKKRKREESVEQKRSKQ) are a coiled coil. Positions 2714-2729 (QAAKKRKREESVEQKR) are enriched in basic and acidic residues. The span at 2795 to 2818 (PCPPVTPAPPAPPAPPPSPPPPPA) shows a compositional bias: pro residues. A compositionally biased stretch (basic and acidic residues) spans 2838 to 2847 (KREEEKDSSS). A PHD-type 2 zinc finger spans residues 2867-2918 (KLYCICKTPYDESKFYIGCDRCQNWYHGRCVGILQSEAELIDEYVCPQCQST). The 105-residue stretch at 2927–3031 (PLTEKDYEGL…SFFVQKLKGF (105 aa)) folds into the Bromo domain.

Belongs to the PBTF family. As to quaternary structure, interacts with MAZ. Interacts with KEAP1. Component of the NURF-1 ISWI chromatin remodeling complex (also called the nucleosome-remodeling factor (NURF) complex) at least composed of SMARCA1 (isoform 2), BPTF, RBBP4 and RBBP7. Within the complex interacts with isoform 2 of SMARCA1. Component of the BPFT-SMARCA1 complex at least composed of SMARCA1 (isoform 1), BPFT, RBBP4 and RBBP7; the complex is catalytically inactive and does not remodel chromatin. Within the complex interacts with isoform 1 of SMARCA1. Component of the NURF-5 ISWI chromatin remodeling complex at least composed of SMARCA5/SNF2H and BPTF. Within NURF-5 ISWI chromatin remodeling complex interacts with SMARCA5/SNF2H. In terms of processing, phosphorylation enhances DNA-binding. Highly susceptible to proteolysis. Ubiquitously expressed, with highest levels in testis. Present in kidney, liver and brain. In the brain, highest levels are found in motor cortex (at protein level).

It localises to the cytoplasm. Its subcellular location is the nucleus. Regulatory subunit of the ATP-dependent NURF-1 and NURF-5 ISWI chromatin remodeling complexes, which form ordered nucleosome arrays on chromatin and facilitate access to DNA during DNA-templated processes such as DNA replication, transcription, and repair. The NURF-1 ISWI chromatin remodeling complex has a lower ATP hydrolysis rate than the NURF-5 ISWI chromatin remodeling complex. Within the NURF-1 ISWI chromatin-remodeling complex, binds to the promoters of En1 and En2 to positively regulate their expression and promote brain development. Histone-binding protein which binds to H3 tails trimethylated on 'Lys-4' (H3K4me3), which mark transcription start sites of active genes. Binds to histone H3 tails dimethylated on 'Lys-4' (H3K4Me2) to a lesser extent. May also regulate transcription through direct binding to DNA or transcription factors. The chain is Nucleosome-remodeling factor subunit BPTF (BPTF) from Homo sapiens (Human).